Consider the following 324-residue polypeptide: NADH-ubiquinone oxidoreductase chain 1 (324 aa).

Helical transmembrane passes span 9–29, 43–63, 75–95, 106–126, 146–166, 177–197, 228–250, 259–279, and 299–319; these read ILNP…LTLL, PNIV…KLFI, ILFI…WAPL, LAIL…LGSG, ISYE…TGGF, SIWL…STLA, LFFL…LFLG, ELTT…FLWV, and FLPL…TFAG.

This sequence belongs to the complex I subunit 1 family.

The protein resides in the mitochondrion inner membrane. The enzyme catalyses a ubiquinone + NADH + 5 H(+)(in) = a ubiquinol + NAD(+) + 4 H(+)(out). Its function is as follows. Core subunit of the mitochondrial membrane respiratory chain NADH dehydrogenase (Complex I) that is believed to belong to the minimal assembly required for catalysis. Complex I functions in the transfer of electrons from NADH to the respiratory chain. The immediate electron acceptor for the enzyme is believed to be ubiquinone. This Tetraodon nigroviridis (Spotted green pufferfish) protein is NADH-ubiquinone oxidoreductase chain 1 (MT-ND1).